Consider the following 317-residue polypeptide: Transaldolase (317 aa).

The Schiff-base intermediate with substrate role is filled by K126.

This sequence belongs to the transaldolase family. Type 1 subfamily. In terms of assembly, homodimer.

The protein localises to the cytoplasm. It carries out the reaction D-sedoheptulose 7-phosphate + D-glyceraldehyde 3-phosphate = D-erythrose 4-phosphate + beta-D-fructose 6-phosphate. It participates in carbohydrate degradation; pentose phosphate pathway; D-glyceraldehyde 3-phosphate and beta-D-fructose 6-phosphate from D-ribose 5-phosphate and D-xylulose 5-phosphate (non-oxidative stage): step 2/3. In terms of biological role, transaldolase is important for the balance of metabolites in the pentose-phosphate pathway. This Burkholderia multivorans (strain ATCC 17616 / 249) protein is Transaldolase.